The sequence spans 761 residues: Complement factor B (761 aa).

The signal sequence occupies residues 1–22 (MESPQLCLVLLVLGFSSGGVSA). Sushi domains lie at 32–97 (VSCS…ECRA), 98–157 (IRCP…ICDD), and 160–217 (GYCP…SCQD). Disulfide bonds link Cys-34-Cys-73, Cys-59-Cys-95, Cys-100-Cys-142, Cys-128-Cys-155, Cys-162-Cys-202, and Cys-188-Cys-215. Residues Asn-119 and Asn-139 are each glycosylated (N-linked (GlcNAc...) asparagine). The VWFA domain maps to 267–466 (NIYLVLDGSD…DLENVFYQMI (200 aa)). Mg(2+) contacts are provided by Ser-275 and Ser-277. Asn-282 carries N-linked (GlcNAc...) asparagine glycosylation. Mg(2+) is bound at residue Thr-350. Asn-375 carries an N-linked (GlcNAc...) asparagine glycan. The Peptidase S1 domain maps to 474 to 754 (LCGMVWEHKK…VLPWLKDKLK (281 aa)). Disulfide bonds link Cys-475-Cys-593, Cys-508-Cys-524, Cys-596-Cys-612, Cys-653-Cys-679, and Cys-692-Cys-722. Active-site charge relay system residues include His-523 and Asp-573. The Charge relay system role is filled by Ser-696.

Belongs to the peptidase S1 family. Monomer. Interacts with complement C3b; this interaction is dependent on the presence of Mg(2+). In terms of assembly, catalytic component of the C3 convertase of the alternative complement pathway, also named C3bBb, composed of complement factor B Bb and complement C3b. Catalytic component of the C5 convertase of the alternative complement pathway, also named C3bBb3b, composed of complement factor B Bb and additional molecules of complement C3b. Interacts to CFP; this interaction contributes to the stabilization of the active C3-convertase enzyme complex. It depends on Mg(2+) as a cofactor. Requires Mn(2+) as cofactor. In terms of processing, cleaved by CFD following activation of the alternative complement system, generating Ba and Bb chains. Cleavage and activation takes place when CFB is already associated with complement C3b.

The protein resides in the secreted. Its subcellular location is the cell surface. The enzyme catalyses Cleavage of Arg-|-Ser bond in complement component C3 alpha-chain to yield C3a and C3b, and Arg-|-Xaa bond in complement component C5 alpha-chain to yield C5a and C5b.. Precursor of the catalytic component of the C3 and C5 convertase complexes of the alternative pathway of the complement system, a cascade of proteins that leads to phagocytosis and breakdown of pathogens and signaling that strengthens the adaptive immune system. The alternative complement pathway acts as an amplification loop that enhances other complement pathways (classical, lectin and GZMK) by promoting formation of additional C3 and C5 convertases. CFB is cleaved and activated by CFD to generate Ba and Bb chains; Bb chain constituting the catalytic component of the C3 and C5 convertases. In terms of biological role, serine protease component of the complement C3 and C5 convertase complexes of the alternative complement pathway. Following cleavage and activation by factor D (CFD), forms the C3 convertase together with complement C3b. As part of the C3 convertase, cleaves and activates C3 into C3a anaphylatoxin and C3b opsonin, the next components of the complement pathways. When an additional complement C3b molecule binds to the C3 convertase, forms the C5 convertase, which cleaves and activates C5 into C5a anaphylatoxin and C5b component of the membrane attack complex. Functionally, involved in proliferation and differentiation of preactivated B-lymphocytes, rapid spreading of peripheral blood monocytes, stimulation of lymphocyte blastogenesis and lysis of erythrocytes. The protein is Complement factor B (Cfb) of Mus musculus (Mouse).